A 285-amino-acid chain; its full sequence is Bifunctional protein FolD 2 (285 aa).

NADP(+) contacts are provided by residues 164–166 (GRS), Ser-189, and Val-230.

This sequence belongs to the tetrahydrofolate dehydrogenase/cyclohydrolase family. As to quaternary structure, homodimer.

The enzyme catalyses (6R)-5,10-methylene-5,6,7,8-tetrahydrofolate + NADP(+) = (6R)-5,10-methenyltetrahydrofolate + NADPH. It catalyses the reaction (6R)-5,10-methenyltetrahydrofolate + H2O = (6R)-10-formyltetrahydrofolate + H(+). It functions in the pathway one-carbon metabolism; tetrahydrofolate interconversion. Its function is as follows. Catalyzes the oxidation of 5,10-methylenetetrahydrofolate to 5,10-methenyltetrahydrofolate and then the hydrolysis of 5,10-methenyltetrahydrofolate to 10-formyltetrahydrofolate. This is Bifunctional protein FolD 2 from Geobacter sulfurreducens (strain ATCC 51573 / DSM 12127 / PCA).